Here is a 284-residue protein sequence, read N- to C-terminus: Diaminopimelate epimerase (284 aa).

The substrate site is built by Asn-20, Gln-53, and Asn-73. Cys-82 serves as the catalytic Proton donor. Substrate is bound by residues 83 to 84 (GN), Asn-167, Asn-200, and 218 to 219 (ER). Cys-227 (proton acceptor) is an active-site residue. 228-229 (GS) provides a ligand contact to substrate.

It belongs to the diaminopimelate epimerase family. In terms of assembly, homodimer.

It is found in the cytoplasm. The enzyme catalyses (2S,6S)-2,6-diaminopimelate = meso-2,6-diaminopimelate. Its pathway is amino-acid biosynthesis; L-lysine biosynthesis via DAP pathway; DL-2,6-diaminopimelate from LL-2,6-diaminopimelate: step 1/1. Catalyzes the stereoinversion of LL-2,6-diaminopimelate (L,L-DAP) to meso-diaminopimelate (meso-DAP), a precursor of L-lysine and an essential component of the bacterial peptidoglycan. In Xanthomonas euvesicatoria pv. vesicatoria (strain 85-10) (Xanthomonas campestris pv. vesicatoria), this protein is Diaminopimelate epimerase.